Here is a 307-residue protein sequence, read N- to C-terminus: Ornithine carbamoyltransferase (307 aa).

Carbamoyl phosphate contacts are provided by residues 51–54 (STRT), glutamine 78, arginine 102, and 129–132 (HPVQ). Residues asparagine 159, aspartate 223, and 227 to 228 (SM) each bind L-ornithine. Carbamoyl phosphate is bound by residues 263–264 (CL) and arginine 291.

The protein belongs to the aspartate/ornithine carbamoyltransferase superfamily. OTCase family.

The protein localises to the cytoplasm. The enzyme catalyses carbamoyl phosphate + L-ornithine = L-citrulline + phosphate + H(+). It participates in amino-acid biosynthesis; L-arginine biosynthesis; L-arginine from L-ornithine and carbamoyl phosphate: step 1/3. Reversibly catalyzes the transfer of the carbamoyl group from carbamoyl phosphate (CP) to the N(epsilon) atom of ornithine (ORN) to produce L-citrulline. The sequence is that of Ornithine carbamoyltransferase from Wolinella succinogenes (strain ATCC 29543 / DSM 1740 / CCUG 13145 / JCM 31913 / LMG 7466 / NCTC 11488 / FDC 602W) (Vibrio succinogenes).